The following is a 583-amino-acid chain: SHC-transforming protein 1 (583 aa).

Residue methionine 1 is modified to N-acetylmethionine. A disordered region spans residues methionine 1–glutamate 92. Residues glutamate 16–proline 44 are compositionally biased toward low complexity. Serine 36 and serine 139 each carry phosphoserine. An N6-acetyllysine modification is found at lysine 154. The region spanning methionine 156–glutamate 339 is the PID domain. The interval glutamate 340–proline 487 is CH1. Phosphotyrosine is present on residues tyrosine 349 and tyrosine 350. The segment covering alanine 372–alanine 384 has biased composition (low complexity). Residues alanine 372–proline 415 form a disordered region. Position 427 is a phosphotyrosine (tyrosine 427). Serine 453 carries the post-translational modification Phosphoserine. Residues tryptophan 488–valine 579 enclose the SH2 domain.

As to quaternary structure, interacts with CPNE3; this interaction may mediate the binding of CPNE3 with ERBB2. Interacts with the NPXY motif of tyrosine-phosphorylated IGF1R and INSR in vitro via the PID domain. Once activated, binds to GRB2. Interacts with tyrosine-phosphorylated CD3T and DDR2. Interacts with the N-terminal region of SH2B2. Interacts with phosphorylated LRP1 and IRS4. Interacts with INPP5D/SHIP1 and INPPL1/SHIP2. Interacts with TRIM31. Interacts with PTPN6/SHP (tyrosine phosphorylated). Identified in a complex containing FGFR4, NCAM1, CDH2, PLCG1, FRS2, SRC, SHC1, GAP43 and CTT. Interacts with ALK, GAB2, GRB7 and KIT. Interacts with FLT4 (tyrosine-phosphorylated). Interacts with EPHB1 and GRB2; activates the MAPK/ERK cascade to regulate cell migration. Interacts with PDGFRB (tyrosine-phosphorylated). Interacts with ERBB4. Interacts with TEK/TIE2 (tyrosine-phosphorylated). Interacts with the Trk receptors NTRK1, NTRK2 and NTRK3; in a phosphotyrosine-dependent manner. Interacts with PTK2/FAK1. Interacts with CEACAM1; this interaction is CEACAM1-phosphorylation-dependent and mediates interaction with EGFR or INSR resulting in decrease coupling of SHC1 to the MAPK3/ERK1-MAPK1/ERK2 pathway. Interacts (via PID domain) with PEAK1 (when phosphorylated at 'Tyr-1188'). Found in a complex with PPP1CA, PPP1CC, SHC1 and PEAK1. (Microbial infection) Interacts with herpes simplex virus 1 UL46. Post-translationally, phosphorylated by activated epidermal growth factor receptor. Phosphorylated in response to FLT4 and KIT signaling. Isoform p46Shc and isoform p52Shc are phosphorylated on tyrosine residues of the Pro-rich domain. Isoform p66Shc is phosphorylated on Ser-36 by PRKCB upon treatment with insulin, hydrogen peroxide or irradiation with ultraviolet light. Tyrosine phosphorylated in response to FLT3 signaling. Tyrosine phosphorylated by activated PTK2B/PYK2. Tyrosine phosphorylated by ligand-activated ALK. Tyrosine phosphorylated by ligand-activated PDGFRB. Tyrosine phosphorylated by TEK/TIE2. May be tyrosine phosphorylated by activated PTK2/FAK1; tyrosine phosphorylation was seen in an astrocytoma biopsy, where PTK2/FAK1 kinase activity is high, but not in normal brain tissue. Isoform p52Shc dephosphorylation by PTPN2 may regulate interaction with GRB2. Widely expressed. Expressed in neural stem cells but absent in mature neurons.

Its subcellular location is the cytoplasm. It is found in the cell junction. The protein localises to the focal adhesion. The protein resides in the mitochondrion matrix. It localises to the mitochondrion. In terms of biological role, signaling adapter that couples activated growth factor receptors to signaling pathways. Participates in a signaling cascade initiated by activated KIT and KITLG/SCF. Isoform p46Shc and isoform p52Shc, once phosphorylated, couple activated receptor tyrosine kinases to Ras via the recruitment of the GRB2/SOS complex and are implicated in the cytoplasmic propagation of mitogenic signals. Isoform p46Shc and isoform p52Shc may thus function as initiators of the Ras signaling cascade in various non-neuronal systems. Isoform p66Shc does not mediate Ras activation, but is involved in signal transduction pathways that regulate the cellular response to oxidative stress and life span. Isoform p66Shc acts as a downstream target of the tumor suppressor p53 and is indispensable for the ability of stress-activated p53 to induce elevation of intracellular oxidants, cytochrome c release and apoptosis. The expression of isoform p66Shc has been correlated with life span. Participates in signaling downstream of the angiopoietin receptor TEK/TIE2, and plays a role in the regulation of endothelial cell migration and sprouting angiogenesis. The polypeptide is SHC-transforming protein 1 (SHC1) (Homo sapiens (Human)).